Here is a 493-residue protein sequence, read N- to C-terminus: 3-octaprenyl-4-hydroxybenzoate carboxy-lyase (493 aa).

Asn172 is a binding site for Mn(2+). Residues 175–177 (IYR), 189–191 (RWL), and 194–195 (RG) each bind prenylated FMN. Glu238 is a Mn(2+) binding site. The active-site Proton donor is the Asp287.

Belongs to the UbiD family. In terms of assembly, homohexamer. It depends on prenylated FMN as a cofactor. Mn(2+) serves as cofactor.

It localises to the cell membrane. It catalyses the reaction a 4-hydroxy-3-(all-trans-polyprenyl)benzoate + H(+) = a 2-(all-trans-polyprenyl)phenol + CO2. Its pathway is cofactor biosynthesis; ubiquinone biosynthesis. In terms of biological role, catalyzes the decarboxylation of 3-octaprenyl-4-hydroxy benzoate to 2-octaprenylphenol, an intermediate step in ubiquinone biosynthesis. This Shewanella putrefaciens (strain CN-32 / ATCC BAA-453) protein is 3-octaprenyl-4-hydroxybenzoate carboxy-lyase.